The following is a 164-amino-acid chain: RNA pyrophosphohydrolase (164 aa).

A Nudix hydrolase domain is found at 12 to 158 (RYRQCAGVML…KREVYRAVVK (147 aa)). The Nudix box motif lies at 47–68 (GGIDPGETQQEAAMRELEEETG).

The protein belongs to the Nudix hydrolase family. RppH subfamily. A divalent metal cation is required as a cofactor.

In terms of biological role, accelerates the degradation of transcripts by removing pyrophosphate from the 5'-end of triphosphorylated RNA, leading to a more labile monophosphorylated state that can stimulate subsequent ribonuclease cleavage. In Erythrobacter litoralis (strain HTCC2594), this protein is RNA pyrophosphohydrolase.